The chain runs to 321 residues: Ribose-phosphate pyrophosphokinase (321 aa).

Residues 44-46 (DGE) and 103-104 (RQ) contribute to the ATP site. Mg(2+) is bound by residues His137 and Asp179. Lys202 is a catalytic residue. Residues Arg204, Asp228, and 232–236 (DTAGT) contribute to the D-ribose 5-phosphate site.

This sequence belongs to the ribose-phosphate pyrophosphokinase family. Class I subfamily. As to quaternary structure, homohexamer. The cofactor is Mg(2+).

The protein localises to the cytoplasm. It catalyses the reaction D-ribose 5-phosphate + ATP = 5-phospho-alpha-D-ribose 1-diphosphate + AMP + H(+). Its pathway is metabolic intermediate biosynthesis; 5-phospho-alpha-D-ribose 1-diphosphate biosynthesis; 5-phospho-alpha-D-ribose 1-diphosphate from D-ribose 5-phosphate (route I): step 1/1. Involved in the biosynthesis of the central metabolite phospho-alpha-D-ribosyl-1-pyrophosphate (PRPP) via the transfer of pyrophosphoryl group from ATP to 1-hydroxyl of ribose-5-phosphate (Rib-5-P). This Staphylococcus haemolyticus (strain JCSC1435) protein is Ribose-phosphate pyrophosphokinase.